The sequence spans 174 residues: MVKVGMPKVGIIMGSDSDLPVMKEAAKVLEDFEVDYEMKVISAHRTPERLHEYARTAEERGIEVIIAGAGGAAHLPGVLAALTMIPVIGVPIKSKALNGLDSLLSIVQMPPGIPVATVGIDGAKNAALLALEILSIKYPEIKEKLKKYREDMKRKVEEKSKKLEELGWRKYLEG.

Substrate is bound by residues Ser15, Asp18, and Arg45.

This sequence belongs to the AIR carboxylase family. Class I subfamily.

It carries out the reaction 5-carboxyamino-1-(5-phospho-D-ribosyl)imidazole + H(+) = 5-amino-1-(5-phospho-D-ribosyl)imidazole-4-carboxylate. It participates in purine metabolism; IMP biosynthesis via de novo pathway; 5-amino-1-(5-phospho-D-ribosyl)imidazole-4-carboxylate from 5-amino-1-(5-phospho-D-ribosyl)imidazole (N5-CAIR route): step 2/2. Catalyzes the conversion of N5-carboxyaminoimidazole ribonucleotide (N5-CAIR) to 4-carboxy-5-aminoimidazole ribonucleotide (CAIR). The protein is N5-carboxyaminoimidazole ribonucleotide mutase of Pyrococcus abyssi (strain GE5 / Orsay).